The chain runs to 188 residues: Dual specificity protein phosphatase 18 (188 aa).

One can recognise a Tyrosine-protein phosphatase domain in the interval 19–160; the sequence is GLSQITSSLY…LIHYEFQLFG (142 aa). The interval 95-141 is sufficient for mitochondrial localization; that stretch reads MKQGRTLLHCAAGVSRSAALCLAYLMKYHAMSLLDAHTWTKSCRPII. C104 acts as the Phosphocysteine intermediate in catalysis.

It belongs to the protein-tyrosine phosphatase family. Non-receptor class dual specificity subfamily.

It is found in the cytoplasm. Its subcellular location is the nucleus. It localises to the mitochondrion inner membrane. The catalysed reaction is O-phospho-L-tyrosyl-[protein] + H2O = L-tyrosyl-[protein] + phosphate. It catalyses the reaction O-phospho-L-seryl-[protein] + H2O = L-seryl-[protein] + phosphate. It carries out the reaction O-phospho-L-threonyl-[protein] + H2O = L-threonyl-[protein] + phosphate. Can dephosphorylate single and diphosphorylated synthetic MAPK peptides, with preference for the phosphotyrosine and diphosphorylated forms over phosphothreonine. In vitro, dephosphorylates p-nitrophenyl phosphate (pNPP). In Bos taurus (Bovine), this protein is Dual specificity protein phosphatase 18 (DUSP18).